We begin with the raw amino-acid sequence, 256 residues long: UPF0246 protein Bpet1601 (256 aa).

It belongs to the UPF0246 family.

The protein is UPF0246 protein Bpet1601 of Bordetella petrii (strain ATCC BAA-461 / DSM 12804 / CCUG 43448).